The following is a 176-amino-acid chain: Adenine phosphoribosyltransferase (176 aa).

This sequence belongs to the purine/pyrimidine phosphoribosyltransferase family. Homodimer.

The protein localises to the cytoplasm. It carries out the reaction AMP + diphosphate = 5-phospho-alpha-D-ribose 1-diphosphate + adenine. It participates in purine metabolism; AMP biosynthesis via salvage pathway; AMP from adenine: step 1/1. Its function is as follows. Catalyzes a salvage reaction resulting in the formation of AMP, that is energically less costly than de novo synthesis. The protein is Adenine phosphoribosyltransferase of Borreliella burgdorferi (strain ZS7) (Borrelia burgdorferi).